The chain runs to 365 residues: Heat-inducible transcription repressor HrcA (365 aa).

It belongs to the HrcA family.

Negative regulator of class I heat shock genes (grpE-dnaK-dnaJ and groELS operons). Prevents heat-shock induction of these operons. The chain is Heat-inducible transcription repressor HrcA from Nodularia spumigena.